Reading from the N-terminus, the 668-residue chain is UvrABC system protein B (668 aa).

A Helicase ATP-binding domain is found at 36 to 276 (DNIKGGEKAQ…EEAIKNIMEE (241 aa)). 49-56 (GATGTGKT) is an ATP binding site. The Beta-hairpin motif lies at 102 to 125 (YYDYYQPEAYVPSSDTYIEKDSSV). The Helicase C-terminal domain occupies 440–606 (QMDDLLGEIN…TIKKEIRDLI (167 aa)). The UVR domain occupies 632 to 667 (QEAIKKLQKQMHEAAELLDFELAAQIRDMVLELKSM).

The protein belongs to the UvrB family. Forms a heterotetramer with UvrA during the search for lesions. Interacts with UvrC in an incision complex.

It is found in the cytoplasm. Functionally, the UvrABC repair system catalyzes the recognition and processing of DNA lesions. A damage recognition complex composed of 2 UvrA and 2 UvrB subunits scans DNA for abnormalities. Upon binding of the UvrA(2)B(2) complex to a putative damaged site, the DNA wraps around one UvrB monomer. DNA wrap is dependent on ATP binding by UvrB and probably causes local melting of the DNA helix, facilitating insertion of UvrB beta-hairpin between the DNA strands. Then UvrB probes one DNA strand for the presence of a lesion. If a lesion is found the UvrA subunits dissociate and the UvrB-DNA preincision complex is formed. This complex is subsequently bound by UvrC and the second UvrB is released. If no lesion is found, the DNA wraps around the other UvrB subunit that will check the other stand for damage. The sequence is that of UvrABC system protein B from Streptococcus thermophilus (strain ATCC BAA-491 / LMD-9).